We begin with the raw amino-acid sequence, 594 residues long: Suppressor of hairless protein (594 aa).

Residues 20 to 87 are disordered; sequence ETTVVNPNGS…QQQQQHQQQM (68 aa). The span at 58 to 87 shows a compositional bias: low complexity; it reads QQQQQQLQVHHQQQQQQQQQQQQQQHQQQM. DNA-binding regions lie at residues 131–141, 239–244, and 266–271; these read QKSYGNEKRFF, SKPSKK, and RLRSQT. Residues 429-519 form the IPT/TIG domain; sequence PIVNSLNLNG…YATGLTFTYT (91 aa). Composition is skewed to low complexity over residues 542–562 and 569–580; these read NNNN…AGSP and QQQQQQHQALPS. A disordered region spans residues 542–594; the sequence is NNNNNITSISNNNNSNNAGSPAAGGGLQQQQQQHQALPSISEVQWNSHGSGLS. A compositionally biased stretch (polar residues) spans 582–594; it reads SEVQWNSHGSGLS.

This sequence belongs to the Su(H) family. In terms of assembly, interacts with activated cleaved Notch. Interacts with Hairless, this interaction preventing its DNA-binding activity. Interacts with insv (via BEN domain).

It is found in the nucleus. The protein resides in the cytoplasm. Transcriptional regulator that plays a central role in Notch signaling, a signaling pathway involved in cell-cell communication that regulates a broad spectrum of cell-fate determinations. Binds directly the 5'-GTGRGAR-3' DNA consensus sequence, which is present in the regulatory region of several genes. Acts as a transcriptional repressor when it is not associated with Notch proteins. When associated with some Notch protein, it acts as a transcriptional activator that activates transcription of Notch target genes. Required for transcription of Sim. Specifically binds to the immunoglobulin kappa-type J segment recombination signal sequence. Required for neurogenesis in imaginal disks. In the larval brain, might play a role as a transducer of Notch signaling during type II neuroblast development. Also functions independently of the Notch pathway, in the development of the bristle sensory organ precursor cell. The chain is Suppressor of hairless protein (Su(H)) from Drosophila melanogaster (Fruit fly).